The primary structure comprises 149 residues: Putative pre-16S rRNA nuclease (149 aa).

It belongs to the YqgF nuclease family.

The protein localises to the cytoplasm. Its function is as follows. Could be a nuclease involved in processing of the 5'-end of pre-16S rRNA. In Synechococcus elongatus (strain ATCC 33912 / PCC 7942 / FACHB-805) (Anacystis nidulans R2), this protein is Putative pre-16S rRNA nuclease.